Consider the following 336-residue polypeptide: F420-dependent glucose-6-phosphate dehydrogenase (336 aa).

Asp-39 is a binding site for coenzyme F420-(gamma-Glu)n. The Proton donor role is filled by His-40. Coenzyme F420-(gamma-Glu)n contacts are provided by residues Thr-76 and 107–108 (TG). Residue Glu-109 is the Proton acceptor of the active site. Coenzyme F420-(gamma-Glu)n is bound by residues Asn-112, 177–178 (GG), and 180–181 (VV). The substrate site is built by Thr-195, Lys-198, Lys-259, and Arg-283.

The protein belongs to the F420-dependent glucose-6-phosphate dehydrogenase family. Homodimer.

The catalysed reaction is oxidized coenzyme F420-(gamma-L-Glu)(n) + D-glucose 6-phosphate + H(+) = 6-phospho-D-glucono-1,5-lactone + reduced coenzyme F420-(gamma-L-Glu)(n). In terms of biological role, catalyzes the coenzyme F420-dependent oxidation of glucose 6-phosphate (G6P) to 6-phosphogluconolactone. Appears to have a role in resistance to oxidative stress, via its consumption of G6P that serves as a source of reducing power to combat oxidative stress in mycobacteria. Cannot use NAD, NADP, FAD or FMN instead of coenzyme F420 as an electron acceptor. Exhibits nearly no activity with D-mannose-6-phosphate or D-fructose-6-phosphate as substrate. This Mycolicibacterium smegmatis (strain ATCC 700084 / mc(2)155) (Mycobacterium smegmatis) protein is F420-dependent glucose-6-phosphate dehydrogenase (fgd).